Here is an 84-residue protein sequence, read N- to C-terminus: Small ribosomal subunit protein bS20 (84 aa).

It belongs to the bacterial ribosomal protein bS20 family.

In terms of biological role, binds directly to 16S ribosomal RNA. The polypeptide is Small ribosomal subunit protein bS20 (Porphyromonas gingivalis (strain ATCC 33277 / DSM 20709 / CIP 103683 / JCM 12257 / NCTC 11834 / 2561)).